Consider the following 930-residue polypeptide: A disintegrin and metalloproteinase with thrombospondin motifs 5 (930 aa).

The first 21 residues, 1–21, serve as a signal peptide directing secretion; it reads MRLEWAPLLLLLLLLSASCLS. A propeptide spanning residues 22–261 is cleaved from the precursor; the sequence is LAADSPAAAP…PQTWWRRRRR (240 aa). The span at 31–53 shows a compositional bias: low complexity; it reads PAQDKTRQPQAAAAAAEPDQPQG. Disordered regions lie at residues 31 to 68 and 207 to 231; these read PAQDKTRQPQAAAAAAEPDQPQGEETRERGHLQPLAGQ and ASCETPASPSGPQESPSVHSRSRRR. The short motif at 207–214 is the Cysteine switch element; it reads ASCETPAS. Position 209 (C209) interacts with Zn(2+). Positions 211–225 are enriched in polar residues; sequence TPASPSGPQESPSVH. Positions 267–476 constitute a Peptidase M12B domain; it reads RQVELLLVAD…GHGNCLLDLP (210 aa). 8 disulfide bridges follow: C342–C394, C371–C376, C388–C471, C426–C455, C497–C519, C508–C529, C514–C548, and C542–C553. H410 serves as a coordination point for Zn(2+). Residue E411 is part of the active site. 2 residues coordinate Zn(2+): H414 and H420. The 82-residue stretch at 485-566 folds into the Disintegrin domain; it reads ELPGQTYDAT…TKKKYYSTSS (82 aa). Residue N498 is glycosylated (N-linked (GlcNAc...) asparagine). The region spanning 567 to 622 is the TSP type-1 1 domain; it reads HGNWGSWGPWGQCSRSCGGGVQFAYRHCNNPAPRNSGRYCTGKRAIYRSCSVTPCP. C-linked (Man) tryptophan glycosylation is found at W570 and W573. 3 disulfides stabilise this stretch: C579–C616, C583–C621, and C594–C606. Residue S582 is glycosylated (O-linked (Fuc...) serine). 3 N-linked (GlcNAc...) asparagine glycosylation sites follow: N728, N802, and N807. A spacer region spans residues 732–874; the sequence is TKIIGTFNKK…HGSNKVGPHS (143 aa). Residues 875–929 form the TSP type-1 2 domain; the sequence is TQLQWVTGPWLACSRTCDTGWHTRTVQCQDGNRKLAKGCLLSQRPSAFKQCLLKK.

Requires Zn(2+) as cofactor. The precursor is cleaved by furin and PCSK7 outside of the cell. Post-translationally, glycosylated. Can be O-fucosylated by POFUT2 on a serine or a threonine residue found within the consensus sequence C1-X(2)-(S/T)-C2-G of the TSP type-1 repeat domains where C1 and C2 are the first and second cysteine residue of the repeat, respectively. Fucosylated repeats can then be further glycosylated by the addition of a beta-1,3-glucose residue by the glucosyltransferase, B3GALTL. Fucosylation mediates the efficient secretion of ADAMTS family members. Can also be C-glycosylated with one or two mannose molecules on tryptophan residues within the consensus sequence W-X-X-W of the TPRs, and N-glycosylated. These other glycosylations can also facilitate secretion. Expressed in skeletal muscle.

It localises to the secreted. Its subcellular location is the extracellular space. The protein resides in the extracellular matrix. In terms of biological role, metalloproteinase that plays an important role in connective tissue organization, development, inflammation and cell migration. Extracellular matrix (ECM) degrading enzyme that shows proteolytic activity toward the hyalectan group of chondroitin sulfate proteoglycans (CSPGs) including ACAN, VCAN, BCAN and NCAN. Cleavage within the hyalectans occurs at Glu-Xaa recognition motifs. Plays a role in embryonic development, including limb and cardiac morphogenesis, and skeletal muscle development through its VCAN remodeling properties. Cleaves VCAN in the pericellular matrix surrounding myoblasts, facilitating myoblast contact and fusion which is required for skeletal muscle development and regeneration. Participates in the development of brown adipose tissue and browning of white adipose tissue. Plays an important role for T-lymphocyte migration from draining lymph nodes following viral infection. The sequence is that of A disintegrin and metalloproteinase with thrombospondin motifs 5 (Adamts5) from Mus musculus (Mouse).